Consider the following 757-residue polypeptide: Xaa-Pro dipeptidyl-peptidase (757 aa).

Residues serine 348, aspartate 468, and histidine 498 each act as charge relay system in the active site.

It belongs to the peptidase S15 family. In terms of assembly, homodimer.

It localises to the cytoplasm. The catalysed reaction is Hydrolyzes Xaa-Pro-|- bonds to release unblocked, N-terminal dipeptides from substrates including Ala-Pro-|-p-nitroanilide and (sequentially) Tyr-Pro-|-Phe-Pro-|-Gly-Pro-|-Ile.. In terms of biological role, removes N-terminal dipeptides sequentially from polypeptides having unsubstituted N-termini provided that the penultimate residue is proline. The polypeptide is Xaa-Pro dipeptidyl-peptidase (Streptococcus pneumoniae (strain ATCC 700669 / Spain 23F-1)).